A 167-amino-acid chain; its full sequence is NAD(P)H-quinone oxidoreductase subunit I, chloroplastic (167 aa).

2 4Fe-4S ferredoxin-type domains span residues 55–84 (GRIHFEFDKCIACEVCVRVCPIDLPVVDWK) and 95–124 (LNYSIDFGICIFCGNCVEYCPTNCLSMTEE). Residues C64, C67, C70, C74, C104, C107, C110, and C114 each contribute to the [4Fe-4S] cluster site.

The protein belongs to the complex I 23 kDa subunit family. NDH is composed of at least 16 different subunits, 5 of which are encoded in the nucleus. [4Fe-4S] cluster serves as cofactor.

It is found in the plastid. Its subcellular location is the chloroplast thylakoid membrane. It carries out the reaction a plastoquinone + NADH + (n+1) H(+)(in) = a plastoquinol + NAD(+) + n H(+)(out). The enzyme catalyses a plastoquinone + NADPH + (n+1) H(+)(in) = a plastoquinol + NADP(+) + n H(+)(out). Its function is as follows. NDH shuttles electrons from NAD(P)H:plastoquinone, via FMN and iron-sulfur (Fe-S) centers, to quinones in the photosynthetic chain and possibly in a chloroplast respiratory chain. The immediate electron acceptor for the enzyme in this species is believed to be plastoquinone. Couples the redox reaction to proton translocation, and thus conserves the redox energy in a proton gradient. The sequence is that of NAD(P)H-quinone oxidoreductase subunit I, chloroplastic from Vitis vinifera (Grape).